The chain runs to 350 residues: Ketol-acid reductoisomerase (NADP(+)) (350 aa).

The region spanning 4 to 187 (VSITTDYSRM…GGARANIIKT (184 aa)) is the KARI N-terminal Rossmann domain. NADP(+) is bound by residues 30 to 33 (YGSQ), arginine 53, threonine 58, and 88 to 91 (DMVQ). Histidine 113 is a catalytic residue. Glycine 139 contacts NADP(+). Residues 188–333 (TFKEETETDL…KQLRAKMVWL (146 aa)) form the KARI C-terminal knotted domain. Residues aspartate 196, glutamate 200, glutamate 232, and glutamate 236 each coordinate Mg(2+). Residue serine 257 coordinates substrate.

Belongs to the ketol-acid reductoisomerase family. The cofactor is Mg(2+).

The enzyme catalyses (2R)-2,3-dihydroxy-3-methylbutanoate + NADP(+) = (2S)-2-acetolactate + NADPH + H(+). It catalyses the reaction (2R,3R)-2,3-dihydroxy-3-methylpentanoate + NADP(+) = (S)-2-ethyl-2-hydroxy-3-oxobutanoate + NADPH + H(+). The protein operates within amino-acid biosynthesis; L-isoleucine biosynthesis; L-isoleucine from 2-oxobutanoate: step 2/4. Its pathway is amino-acid biosynthesis; L-valine biosynthesis; L-valine from pyruvate: step 2/4. In terms of biological role, involved in the biosynthesis of branched-chain amino acids (BCAA). Catalyzes an alkyl-migration followed by a ketol-acid reduction of (S)-2-acetolactate (S2AL) to yield (R)-2,3-dihydroxy-isovalerate. In the isomerase reaction, S2AL is rearranged via a Mg-dependent methyl migration to produce 3-hydroxy-3-methyl-2-ketobutyrate (HMKB). In the reductase reaction, this 2-ketoacid undergoes a metal-dependent reduction by NADPH to yield (R)-2,3-dihydroxy-isovalerate. The protein is Ketol-acid reductoisomerase (NADP(+)) of Xylella fastidiosa (strain 9a5c).